Here is a 198-residue protein sequence, read N- to C-terminus: Segregation and condensation protein B (198 aa).

The interval 168–198 is disordered; the sequence is KLADPATDEPDQNEMDLFFDRFNQSKEQEEE.

Belongs to the ScpB family. Homodimer. Homodimerization may be required to stabilize the binding of ScpA to the Smc head domains. Component of a cohesin-like complex composed of ScpA, ScpB and the Smc homodimer, in which ScpA and ScpB bind to the head domain of Smc. The presence of the three proteins is required for the association of the complex with DNA.

It localises to the cytoplasm. Its function is as follows. Participates in chromosomal partition during cell division. May act via the formation of a condensin-like complex containing Smc and ScpA that pull DNA away from mid-cell into both cell halves. This is Segregation and condensation protein B from Listeria monocytogenes serovar 1/2a (strain ATCC BAA-679 / EGD-e).